Reading from the N-terminus, the 371-residue chain is Galanin receptor type 2 (371 aa).

Topologically, residues 1 to 27 (MNGSDSQGAEDSSQEGGGGWQPEAVLV) are extracellular. Residue Asn2 is glycosylated (N-linked (GlcNAc...) asparagine). A helical transmembrane segment spans residues 28–48 (PLFFALIFLVGAVGNALVLAV). Residues 49-59 (LLRGGQAVSTT) lie on the Cytoplasmic side of the membrane. A helical membrane pass occupies residues 60–80 (NLFILNLGVADLCFILCCVPF). Residues 81–98 (QATIYTLDDWVFGSLLCK) lie on the Extracellular side of the membrane. Cys97 and Cys174 form a disulfide bridge. Residues 99 to 120 (AVHFLIFLTMHASSFTLAAVSL) form a helical membrane-spanning segment. The Cytoplasmic segment spans residues 121–140 (DRYLAIRYPLHSRELRTPRN). Residues 141–161 (ALAAIGLIWGLALLFSGPYLS) form a helical membrane-spanning segment. Topologically, residues 162 to 186 (YYSQSQLANLTVCHPAWSAPRRRAM) are extracellular. Residues 187-207 (DLCTFVFSYLLPVLVLSLTYA) traverse the membrane as a helical segment. Residues 208-236 (RTLHYLWRTVDPVAAGSGSQRAKRKVTRM) are Cytoplasmic-facing. Residues 237 to 257 (IVIVAVLFCLCWMPHHALILC) form a helical membrane-spanning segment. Residues 258–259 (VW) are Extracellular-facing. The chain crosses the membrane as a helical span at residues 260-280 (FGRFPLTRATYALRILSHLVS). Residues 281–371 (YANSCVNPIV…TLSRTLDPAC (91 aa)) lie on the Cytoplasmic side of the membrane.

Belongs to the G-protein coupled receptor 1 family.

Its subcellular location is the cell membrane. Receptor for the hormone galanin, GALP and spexin-1. The activity of this receptor is mediated by G proteins that activate the phospholipase C/protein kinase C pathway (via G(q)) and that inhibit adenylyl cyclase (via G(i)). This is Galanin receptor type 2 (Galr2) from Mus musculus (Mouse).